Here is a 578-residue protein sequence, read N- to C-terminus: Galectin-3-binding protein (578 aa).

The N-terminal stretch at 1–18 (MAFLWLFSLWLLVPGTQG) is a signal peptide. The SRCR domain maps to 24-124 (MRLVNGASAN…HEKDAGVVCS (101 aa)). Cystine bridges form between cysteine 49–cysteine 113, cysteine 62–cysteine 123, and cysteine 93–cysteine 103. N-linked (GlcNAc...) asparagine glycosylation is found at asparagine 69 and asparagine 102. The 69-residue stretch at 153–221 (CDLFIQVTGQ…FYSRRIEVTM (69 aa)) folds into the BTB domain. The BACK domain maps to 260-360 (PLELYAYAQA…VLPQELFELQ (101 aa)). N-linked (GlcNAc...) asparagine glycans are attached at residues asparagine 362 and asparagine 398.

In terms of assembly, homodimers and homomultimers. The multimers form ring-like structures with a diameter of 30-40 nm. Binds LGALS1 and LGALS3. Binds ITGB1, COL4A1, COL5A1, COL6A1, FN1 and NID. The unglycosylated form interacts with PDE4DIP; this interaction, which is PDE4DIP isoform-specific, may connect a pericentrosomal complex to the gamma-tubulin ring complex (gamma-TuRC) to promote microtubule assembly and acetylation.

It is found in the secreted. It localises to the extracellular space. The protein resides in the extracellular matrix. Functionally, promotes integrin-mediated cell adhesion. May stimulate host defense against viruses and tumor cells. The chain is Galectin-3-binding protein (LGALS3BP) from Mesocricetus auratus (Golden hamster).